Reading from the N-terminus, the 289-residue chain is Bis(5'-nucleosyl)-tetraphosphatase, symmetrical (289 aa).

It belongs to the Ap4A hydrolase family.

The catalysed reaction is P(1),P(4)-bis(5'-adenosyl) tetraphosphate + H2O = 2 ADP + 2 H(+). Hydrolyzes diadenosine 5',5'''-P1,P4-tetraphosphate to yield ADP. The polypeptide is Bis(5'-nucleosyl)-tetraphosphatase, symmetrical (Pseudomonas fluorescens (strain ATCC BAA-477 / NRRL B-23932 / Pf-5)).